Here is a 657-residue protein sequence, read N- to C-terminus: Methionine--tRNA ligase (657 aa).

Positions 13 to 23 (YYPSGNLHIGH) match the 'HIGH' region motif. Residues 308-312 (KMSKS) carry the 'KMSKS' region motif. Lys-311 provides a ligand contact to ATP. The region spanning 557 to 657 (DFDKVEIKAA…SAIPNGAVIK (101 aa)) is the tRNA-binding domain.

This sequence belongs to the class-I aminoacyl-tRNA synthetase family. MetG type 2B subfamily. Homodimer.

Its subcellular location is the cytoplasm. It carries out the reaction tRNA(Met) + L-methionine + ATP = L-methionyl-tRNA(Met) + AMP + diphosphate. In terms of biological role, is required not only for elongation of protein synthesis but also for the initiation of all mRNA translation through initiator tRNA(fMet) aminoacylation. The polypeptide is Methionine--tRNA ligase (Staphylococcus aureus (strain Mu50 / ATCC 700699)).